The chain runs to 338 residues: MTKKYNIAVIGATGNVGRETLNILAERNFPINKIYAVASNNSIGKKVSFGEQVLQISSLDDLDFEEIDIAFFSAGSEVSKKFIPIAIVKNCMVIDKSSFFRLSEDIPLIVPEANLSTLKDFAIKNIISNPNCIAIPLAVVLKPLDNEISIKRVVISTYQSVSGAGKAGMDELYDQTKSKYIFEEKSPNIFPKQIAFNLFPHIGDLNKDGYTSEESKIALELQKIIGDHLKVSVTSVRVPVFVGHSISVNIEFSSKVDAKEVEEILEDADGVVMISQTKDLAYISPTEVVGEDAVYVSRIRDDESKENAINLWITCDNLRKGAALNSVQIAEELIKTYL.

NADP(+)-binding positions include Thr13–Val16 and Asn41–Ser42. Arg101 contributes to the phosphate binding site. The active-site Acyl-thioester intermediate is the Cys132. Substrate is bound at residue Gln159. Ser162–Gly163 provides a ligand contact to NADP(+). Lys216 is a phosphate binding site. Arg237 is a substrate binding site. Residue His244 is the Proton acceptor of the active site. Asn317 serves as a coordination point for NADP(+).

Belongs to the aspartate-semialdehyde dehydrogenase family. Homodimer.

The catalysed reaction is L-aspartate 4-semialdehyde + phosphate + NADP(+) = 4-phospho-L-aspartate + NADPH + H(+). It functions in the pathway amino-acid biosynthesis; L-lysine biosynthesis via DAP pathway; (S)-tetrahydrodipicolinate from L-aspartate: step 2/4. The protein operates within amino-acid biosynthesis; L-methionine biosynthesis via de novo pathway; L-homoserine from L-aspartate: step 2/3. Its pathway is amino-acid biosynthesis; L-threonine biosynthesis; L-threonine from L-aspartate: step 2/5. Functionally, catalyzes the NADPH-dependent formation of L-aspartate-semialdehyde (L-ASA) by the reductive dephosphorylation of L-aspartyl-4-phosphate. The sequence is that of Aspartate-semialdehyde dehydrogenase from Rickettsia bellii (strain RML369-C).